The following is a 169-amino-acid chain: DNA damage-inducible transcript 3 protein (169 aa).

The interval 10–18 (FGTLSSWEL) is interaction with TRIB3. Residues 10 to 26 (FGTLSSWELEAWYEDLQ) are N-terminal. Phosphoserine; by CK2 occurs at positions 14, 15, 30, and 31. The segment at 32–139 (DENGGTYVSP…KVAQLAEENE (108 aa)) is disordered. A compositionally biased stretch (low complexity) spans 74–89 (TSTSQSPHSPDSSQSS). Serine 79 and serine 82 each carry phosphoserine; by MAPK14. The region spanning 99-162 (QGRTRKRKQS…EATRRALIDR (64 aa)) is the bZIP domain. The tract at residues 101-130 (RTRKRKQSGHSPARAGKQRMKEKEQENERK) is basic motif. Positions 119–139 (RMKEKEQENERKVAQLAEENE) are enriched in basic and acidic residues. Positions 134-148 (LAEENERLKQEIERL) are leucine-zipper.

It belongs to the bZIP family. Heterodimer. Interacts with TCF7L2/TCF4, EP300/P300, HDAC1, HDAC5 and HDAC6. Interacts with TRIB3 which blocks its association with EP300/P300. Interacts with FOXO3, CEBPB and ATF4. As to quaternary structure, interacts with isoform AltDDIT3 of DDIT3. Post-translationally, ubiquitinated, leading to its degradation by the proteasome. Phosphorylation at serine residues by MAPK14 enhances its transcriptional activation activity while phosphorylation at serine residues by CK2 inhibits its transcriptional activation activity.

The protein localises to the cytoplasm. It is found in the nucleus. Its function is as follows. Multifunctional transcription factor in endoplasmic reticulum (ER) stress response. Plays an essential role in the response to a wide variety of cell stresses and induces cell cycle arrest and apoptosis in response to ER stress. Plays a dual role both as an inhibitor of CCAAT/enhancer-binding protein (C/EBP) function and as an activator of other genes. Acts as a dominant-negative regulator of C/EBP-induced transcription: dimerizes with members of the C/EBP family, impairs their association with C/EBP binding sites in the promoter regions, and inhibits the expression of C/EBP regulated genes. Positively regulates the transcription of TRIB3, IL6, IL8, IL23, TNFRSF10B/DR5, PPP1R15A/GADD34, BBC3/PUMA, BCL2L11/BIM and ERO1L. Negatively regulates; expression of BCL2 and MYOD1, ATF4-dependent transcriptional activation of asparagine synthetase (ASNS), CEBPA-dependent transcriptional activation of hepcidin (HAMP) and CEBPB-mediated expression of peroxisome proliferator-activated receptor gamma (PPARG). Together with ATF4, mediates ER-mediated cell death by promoting expression of genes involved in cellular amino acid metabolic processes, mRNA translation and the unfolded protein response (UPR) in response to ER stress. Inhibits the canonical Wnt signaling pathway by binding to TCF7L2/TCF4, impairing its DNA-binding properties and repressing its transcriptional activity. Plays a regulatory role in the inflammatory response through the induction of caspase-11 (CASP4/CASP11) which induces the activation of caspase-1 (CASP1) and both these caspases increase the activation of pro-IL1B to mature IL1B which is involved in the inflammatory response. Acts as a major regulator of postnatal neovascularization through regulation of endothelial nitric oxide synthase (NOS3)-related signaling. This is DNA damage-inducible transcript 3 protein (DDIT3) from Homo sapiens (Human).